We begin with the raw amino-acid sequence, 185 residues long: Peptidyl-tRNA hydrolase (185 aa).

TRNA is bound at residue tyrosine 14. Histidine 19 serves as the catalytic Proton acceptor. Tyrosine 64, asparagine 66, and asparagine 112 together coordinate tRNA.

Belongs to the PTH family. As to quaternary structure, monomer.

Its subcellular location is the cytoplasm. It catalyses the reaction an N-acyl-L-alpha-aminoacyl-tRNA + H2O = an N-acyl-L-amino acid + a tRNA + H(+). Its function is as follows. Hydrolyzes ribosome-free peptidyl-tRNAs (with 1 or more amino acids incorporated), which drop off the ribosome during protein synthesis, or as a result of ribosome stalling. Catalyzes the release of premature peptidyl moieties from peptidyl-tRNA molecules trapped in stalled 50S ribosomal subunits, and thus maintains levels of free tRNAs and 50S ribosomes. This Lactobacillus acidophilus (strain ATCC 700396 / NCK56 / N2 / NCFM) protein is Peptidyl-tRNA hydrolase.